Reading from the N-terminus, the 217-residue chain is 4-hydroxy-tetrahydrodipicolinate reductase (217 aa).

NAD(+)-binding positions include 7–12 (GFKGKM), 71–73 (GTT), and 95–98 (SYNF). Catalysis depends on H127, which acts as the Proton donor/acceptor. Residue H128 coordinates (S)-2,3,4,5-tetrahydrodipicolinate. The active-site Proton donor is the K131. 137-138 (GT) is a (S)-2,3,4,5-tetrahydrodipicolinate binding site.

Belongs to the DapB family.

It localises to the cytoplasm. It carries out the reaction (S)-2,3,4,5-tetrahydrodipicolinate + NAD(+) + H2O = (2S,4S)-4-hydroxy-2,3,4,5-tetrahydrodipicolinate + NADH + H(+). The enzyme catalyses (S)-2,3,4,5-tetrahydrodipicolinate + NADP(+) + H2O = (2S,4S)-4-hydroxy-2,3,4,5-tetrahydrodipicolinate + NADPH + H(+). The protein operates within amino-acid biosynthesis; L-lysine biosynthesis via DAP pathway; (S)-tetrahydrodipicolinate from L-aspartate: step 4/4. In terms of biological role, catalyzes the conversion of 4-hydroxy-tetrahydrodipicolinate (HTPA) to tetrahydrodipicolinate. This is 4-hydroxy-tetrahydrodipicolinate reductase from Thermosipho africanus (strain TCF52B).